Consider the following 948-residue polypeptide: PHD finger protein 14 (948 aa).

The segment at 22 to 302 (DYDSSDDSDF…LSQSKSNEDS (281 aa)) is disordered. 2 positions are modified to phosphoserine: S26 and S29. The segment covering 36–47 (ASDSEGSGNGSE) has biased composition (low complexity). A compositionally biased stretch (acidic residues) spans 60–71 (DSEENILEEELN). The segment covering 72-85 (EDIKVKEEQLKNSA) has biased composition (basic and acidic residues). Phosphoserine occurs at positions 84 and 91. Basic and acidic residues-rich tracts occupy residues 95 to 110 (QLIK…NGER) and 117 to 139 (KEKE…EKAT). A compositionally biased stretch (low complexity) spans 140 to 174 (VSENVAASAAATTPATSPPAVNTSPSVPTTTTATE). S196 is modified (phosphoserine). Acidic residues-rich tracts occupy residues 199–212 (ELND…EDDN) and 233–256 (DGDN…EGND). Y206 carries the phosphotyrosine modification. S208 is modified (phosphoserine). T287 carries the phosphothreonine modification. Polar residues predominate over residues 288-297 (NDSLTLSQSK). 5 positions are modified to phosphoserine: S290, S294, S298, S302, and S308. The segment at 319 to 380 (ILICCVCLGD…PWFCDACKCG (62 aa)) adopts a PHD-type 1 zinc-finger fold. Residues C322, C325, C339, C342, H347, and C350 each contribute to the Zn(2+) site. Residue S359 is modified to Phosphoserine. Zn(2+) contacts are provided by C374, C377, C385, C388, H405, C408, C441, C444, C458, C463, H468, C471, C495, and H498. Residues 382–415 (SPSCELCPNQDGIFKETDAGRWVHIVCALYVPGV) form a C2HC pre-PHD-type zinc finger. The PHD-type 2 zinc-finger motif lies at 439–499 (KECSFCEDPR…PFFAYCKQHA (61 aa)). At S530 the chain carries Phosphoserine. The stretch at 630 to 678 (MIQIQENMAEQKNIKDKLENEQEKLHVEYNKLCESLEELQNLNGKLRSE) forms a coiled coil. E648 participates in a covalent cross-link: Glycyl lysine isopeptide (Lys-Gly) (interchain with G-Cter in SUMO2). Position 651 is a phosphoserine (Q651). The segment at 725–779 (LYSCGICKKNHDQHLLLLCDTCKLHYHLGCLDPPLTRMPRKTKNSYWQCSECDQA) adopts a PHD-type 3 zinc-finger fold. Positions 728, 731, 743, 746, 751, 754, 773, and 776 each coordinate Zn(2+). Residues S781, S782, and S835 each carry the phosphoserine modification. Residues 811-862 (VPQDVPPEPKKIPIRNTRTRGRKRSFVPEEEKHEERVPRERRQRQSVLQKKP) form a disordered region. Over residues 836-850 (FVPEEEKHEERVPRE) the composition is skewed to basic and acidic residues. The PHD-type 4 zinc-finger motif lies at 868 to 921 (RTECATCKGTGDNENLVRCDECRLCYHFGCLDPPLKKSPKQTGYGWICQECDSS). Zn(2+) contacts are provided by C871, C874, C886, C889, H894, C897, C915, and C918. Residues 920–948 (SSSSKEDENEAERKNISQELNMEQKNPKK) are disordered. Residues 922–935 (SSKEDENEAERKNI) are compositionally biased toward basic and acidic residues. Positions 936–948 (SQELNMEQKNPKK) are enriched in polar residues.

Its subcellular location is the nucleus. It is found in the chromosome. The protein localises to the cytoplasm. Histone-binding protein. Binds preferentially to unmodified histone H3 but can also bind to a lesser extent to histone H3 trimethylated at 'Lys-9' (H3K9me3) as well as to histone H3 monomethylated at 'Lys-27' (H3K27ac) and trimethylated at 'Lys-27' (H3K27me3). Represses PDGFRA expression, thus playing a role in regulation of mesenchymal cell proliferation. Suppresses the expression of CDKN1A/p21 by reducing the level of trimethylation of histone H3 'Lys-4', leading to enhanced proliferation of germinal center B cells. The chain is PHD finger protein 14 (PHF14) from Homo sapiens (Human).